Reading from the N-terminus, the 37-residue chain is Large ribosomal subunit protein bL36c (37 aa).

The protein belongs to the bacterial ribosomal protein bL36 family.

Its subcellular location is the plastid. In Aneura mirabilis (Parasitic liverwort), this protein is Large ribosomal subunit protein bL36c.